Consider the following 302-residue polypeptide: Protein TILLER ANGLE CONTROL 1 (302 aa).

The short motif at G57–T63 is the IGT motif element. 2 disordered regions span residues E82–E115 and E159–K180. The segment covering D99–E115 has biased composition (acidic residues). The segment covering S162 to Q175 has biased composition (polar residues).

Belongs to the TAC family. Highly expressed in flower buds. Expressed in branch attachment sites, vegetative buds and young fruits.

Its function is as follows. Involved in the regulation of axillary shoot growth angle. Promotes horizontal shoot growth. This chain is Protein TILLER ANGLE CONTROL 1, found in Prunus persica (Peach).